Here is a 158-residue protein sequence, read N- to C-terminus: Transcription elongation factor GreA (158 aa).

Belongs to the GreA/GreB family.

Necessary for efficient RNA polymerase transcription elongation past template-encoded arresting sites. The arresting sites in DNA have the property of trapping a certain fraction of elongating RNA polymerases that pass through, resulting in locked ternary complexes. Cleavage of the nascent transcript by cleavage factors such as GreA or GreB allows the resumption of elongation from the new 3'terminus. GreA releases sequences of 2 to 3 nucleotides. This chain is Transcription elongation factor GreA, found in Rhizobium etli (strain CIAT 652).